We begin with the raw amino-acid sequence, 277 residues long: Protein EURL homolog (277 aa).

Residues 173–201 (LGLWPGERPQNREQRDSRQRRHSGHSREE) form a disordered region. Positions 197 to 229 (HSREELMRKNVEELRQLNEQLLLQIQNVFEELS) form a coiled coil.

Belongs to the EURL family.

Functionally, plays a role in cortical progenitor cell proliferation and differentiation. May promote dendritic spine development of post-migratory cortical projection neurons by modulating the beta-catenin signaling pathway. The sequence is that of Protein EURL homolog from Danio rerio (Zebrafish).